A 573-amino-acid polypeptide reads, in one-letter code: Developmental and secondary metabolism regulator veA (573 aa).

Pro residues predominate over residues 1 to 11 (MATLAAPPPPL). 2 disordered regions span residues 1-24 (MATLAAPPPPLGESGNSNSVSRIT) and 39-63 (QPKRARACGQGSKSHTDRRPVDPPP). Residues 27-230 (GKKITYKLNI…AEQGCRVRIR (204 aa)) form the Velvet domain. Residues 41–46 (KRARAC) carry the Nuclear localization signal motif. 2 positions are modified to phosphothreonine: Thr167 and Thr170. Ser183 is subject to Phosphoserine. 3 disordered regions span residues 236 to 295 (RRRG…RRPS), 307 to 367 (YQRP…SYQS), and 384 to 573 (SHIP…ATMR). Residues 241-260 (KRTEDYDYDNERGYNNRRPD) are compositionally biased toward basic and acidic residues. Phosphotyrosine is present on Tyr254. Composition is skewed to pro residues over residues 318–339 (SSTPIPAPIPMPGPVALPPSTP) and 347–361 (PAPPSVPLAAPPPLH). The segment covering 387 to 412 (PQQTTTPTHPYSPRSSISHSRNQSIS) has biased composition (low complexity). Over residues 452–493 (PSVNSRSKTPSNMITSLPPIQSLSELPSTTSQPSSAIGSSPA) the composition is skewed to polar residues. The PEST stretch occupies residues 459–498 (KTPSNMITSLPPIQSLSELPSTTSQPSSAIGSSPANEPGP). The span at 510-522 (RTYEESFGHDDRP) shows a compositional bias: basic and acidic residues.

It belongs to the velvet family. VeA subfamily. As to quaternary structure, component of the heterotrimeric velvet complex composed of laeA, veA and velB; VeA acting as a bridging protein between laeA and velB. Interacts with the light-sensing phytochrome fphA. Interacts with llmF. Post-translationally, phosphorylated at Thr-167, Thr-170, Ser-183 and Tyr-254. Thr-167 should be phosphorylated and T170 and S183 should be dephosphorylated to achieve light induction of conidiation. Phosphorylation of Ser-183 and Tyr-254 influence sterigmatocystin production in a light-independent manner. Phosphorylation of Thr-167 and Thr-170 modulates expression of veA.

The protein resides in the nucleus. Its subcellular location is the cytoplasm. Functionally, component of the velvet transcription factor complex that controls sexual/asexual developmental ratio in response to light, promoting sexual development in the darkness while stimulating asexual sporulation under illumination. The velvet complex acts as a global regulator for secondary metabolite gene expression. Controls the expression of the sterigmatocystin and penicillin gene clusters. Represses the cryptic ors gene cluster producing orsellinic acid and its F9775 derivatives in a laeA-independent manner. Required for full induction of faoA gene expression by fructosyl amines. Positively regulates the expression of the early sexual development gene esdC. Controls the expression of mannoprotein mnpA. The chain is Developmental and secondary metabolism regulator veA from Emericella nidulans (strain FGSC A4 / ATCC 38163 / CBS 112.46 / NRRL 194 / M139) (Aspergillus nidulans).